The sequence spans 220 residues: MFQGQRGWFCGSVSQDLRQFWVAEGGTISDPRAADFLFSCDASHPDTLRIYQSLDYIEDNATVFHAYYLSAVANAKIKNSVALGHFILPPACLQKEIRRKIGSFIWEQDQHFLIEKHDEVTPNEIKTLRENSELATEHKKELSKSPEKHFIRTPVVEKQMYFPLQNYPVNNMVTGYISIDAMKKFLGELHDFIPGTSGYLAYHVQNEINMSAIKNKLKRK.

The protein belongs to the TERB2 family. Component of the MAJIN-TERB1-TERB2 complex, composed of MAJIN, TERB1 and TERB2.

The protein localises to the chromosome. It is found in the telomere. The protein resides in the nucleus inner membrane. Functionally, meiosis-specific telomere-associated protein involved in meiotic telomere attachment to the nucleus inner membrane, a crucial step for homologous pairing and synapsis. Component of the MAJIN-TERB1-TERB2 complex, which promotes telomere cap exchange by mediating attachment of telomeric DNA to the inner nuclear membrane and replacement of the protective cap of telomeric chromosomes: in early meiosis, the MAJIN-TERB1-TERB2 complex associates with telomeric DNA and the shelterin/telosome complex. During prophase, the complex matures and promotes release of the shelterin/telosome complex from telomeric DNA. This Homo sapiens (Human) protein is Telomere repeats-binding bouquet formation protein 2 (TERB2).